The primary structure comprises 199 residues: Adenylyl-sulfate kinase (199 aa).

The disordered stretch occupies residues 1–22 (MSESNHITWHDSEVTKKQRQHK). 34 to 41 (GLSGSGKS) is an ATP binding site. The Phosphoserine intermediate role is filled by serine 108.

The protein belongs to the APS kinase family.

The catalysed reaction is adenosine 5'-phosphosulfate + ATP = 3'-phosphoadenylyl sulfate + ADP + H(+). Its pathway is sulfur metabolism; hydrogen sulfide biosynthesis; sulfite from sulfate: step 2/3. Functionally, catalyzes the synthesis of activated sulfate. The protein is Adenylyl-sulfate kinase of Staphylococcus epidermidis (strain ATCC 12228 / FDA PCI 1200).